The primary structure comprises 64 residues: Large ribosomal subunit protein uL30 (64 aa).

It belongs to the universal ribosomal protein uL30 family. Part of the 50S ribosomal subunit.

The protein is Large ribosomal subunit protein uL30 of Bradyrhizobium diazoefficiens (strain JCM 10833 / BCRC 13528 / IAM 13628 / NBRC 14792 / USDA 110).